A 216-amino-acid chain; its full sequence is Large ribosomal subunit protein bL25 (216 aa).

Positions 191-216 (LVSAESEEDEDAPAADEVPATEVSEE) are disordered. Positions 195–204 (ESEEDEDAPA) are enriched in acidic residues.

Belongs to the bacterial ribosomal protein bL25 family. CTC subfamily. Part of the 50S ribosomal subunit; part of the 5S rRNA/L5/L18/L25 subcomplex. Contacts the 5S rRNA. Binds to the 5S rRNA independently of L5 and L18.

Its function is as follows. This is one of the proteins that binds to the 5S RNA in the ribosome where it forms part of the central protuberance. This Jannaschia sp. (strain CCS1) protein is Large ribosomal subunit protein bL25.